Reading from the N-terminus, the 78-residue chain is Alpha-neurotoxin homolog 7 (78 aa).

Residues 1 to 21 (MKTLLLTLVVVTIVCLDFGYT) form the signal peptide. 4 disulfide bridges follow: Cys24-Cys42, Cys37-Cys57, Cys59-Cys70, and Cys71-Cys76.

It belongs to the three-finger toxin family. Short-chain subfamily. Orphan group XII sub-subfamily. In terms of tissue distribution, expressed by the venom gland.

Its subcellular location is the secreted. The protein is Alpha-neurotoxin homolog 7 of Micrurus corallinus (Brazilian coral snake).